A 300-amino-acid polypeptide reads, in one-letter code: Energy-coupling factor transporter ATP-binding protein EcfA2 (300 aa).

In terms of domain architecture, ABC transporter spans I3–L258. ATP is bound at residue G40–T47.

Belongs to the ABC transporter superfamily. Energy-coupling factor EcfA family. As to quaternary structure, forms a stable energy-coupling factor (ECF) transporter complex composed of 2 membrane-embedded substrate-binding proteins (S component), 2 ATP-binding proteins (A component) and 2 transmembrane proteins (T component).

It is found in the cell membrane. ATP-binding (A) component of a common energy-coupling factor (ECF) ABC-transporter complex. Unlike classic ABC transporters this ECF transporter provides the energy necessary to transport a number of different substrates. This Mesomycoplasma hyopneumoniae (strain 232) (Mycoplasma hyopneumoniae) protein is Energy-coupling factor transporter ATP-binding protein EcfA2.